The following is a 1038-amino-acid chain: Kinesin-like protein KIN-5B (1038 aa).

Positions 1 to 63 are disordered; the sequence is MAQTPNPSRR…GGGGGGGSEM (63 aa). The span at 24 to 34 shows a compositional bias: basic and acidic residues; sequence RPERRQLELRW. A compositionally biased stretch (gly residues) spans 49–61; that stretch reads GLTGGGGGGGGGS. Positions 69-410 constitute a Kinesin motor domain; it reads NVQVVLRCRP…LDYAYRAKSI (342 aa). ATP is bound at residue 154 to 161; it reads GQTGTGKT. The stretch at 453–502 forms a coiled coil; it reads QERFALEEAEKKTMRDKIEYLETQNKELKMNIESCKKEYLDLEEAHSRAN. A disordered region spans residues 1013-1038; the sequence is DKGKRYVDQGTRTPRSPLMPVNHYNK.

The protein belongs to the TRAFAC class myosin-kinesin ATPase superfamily. Kinesin family. KIN-5/BimC subfamily.

It localises to the cytoplasm. Its subcellular location is the cytoskeleton. The protein resides in the spindle. Functionally, responsible for microtubule translocation. May be important for the organization of phragmoplast-specific arrays of microtubules. Plays an essential role in stabilizing the mitotic spindle. Required during mitotic cytokinesis. The chain is Kinesin-like protein KIN-5B from Oryza sativa subsp. japonica (Rice).